A 483-amino-acid polypeptide reads, in one-letter code: MIQVLLVTLCLAAFPYQGNSIILESGNVNDYEVLYPQKVTALPKGAVQPKYEDTMQYEFKVNGEPVVLHLEKNKGLFSKDYSETHYSSDGRKITTNPPVEDHCYYHGRIQNDADSTASISACNGLKGHFKLQGETYLIEPLKLSDSEAHAVYKYENVEKEDEAPKMCGVTQTNWKSDKPIKKASQLNLTPEQQRFPQRYIELVVVADHRMFTKYNGNLNTIRIWVHELVNTMNVFYRPLNIHVSLTDLEVWSDQDLINVQPAAADTLEAFGDWRETVLLNRISHDNAQLLTAIELDGETIGLANRGTMCDPKLSTGIVQDHSAINLWVAVTMAHEMGHNLGISHDGNQCHCDANSCIMSEELRQQLSFEFSDCSQNQYQTFLTDHNPQCMLNEPLRTDIVSTPVSGNELWETGEESDFDAPANPCCDAATCKLTPGSQCAEGLCCDQCKFMKEGTVCHRAKGDDLDDYCNGISAGCPRNPFHA.

The first 20 residues, 1 to 20, serve as a signal peptide directing secretion; sequence MIQVLLVTLCLAAFPYQGNS. The propeptide occupies 21–191; it reads IILESGNVND…KASQLNLTPE (171 aa). Positions 198–394 constitute a Peptidase M12B domain; sequence RYIELVVVAD…HNPQCMLNEP (197 aa). Ca(2+) contacts are provided by E201 and D285. 3 cysteine pairs are disulfide-bonded: C309–C389, C349–C373, and C351–C356. Residue H334 participates in Zn(2+) binding. E335 is a catalytic residue. Zn(2+) contacts are provided by H338 and H344. Residues C389 and N392 each coordinate Ca(2+). A propeptide spanning residues 395-414 is cleaved from the precursor; sequence LRTDIVSTPVSGNELWETGE. The Disintegrin domain maps to 402-483; that stretch reads TPVSGNELWE…AGCPRNPFHA (82 aa). 4 cysteine pairs are disulfide-bonded: C425–C448, C439–C445, C444–C469, and C457–C476. A Cell attachment site; atypical (KGD) motif is present at residues 461-463; sequence KGD.

Belongs to the venom metalloproteinase (M12B) family. P-II subfamily. P-IIe sub-subfamily. In terms of assembly, heterodimer with piscivostatin-alpha; disulfide-linked (disintegrin). It depends on Zn(2+) as a cofactor. Expressed by the venom gland.

It localises to the secreted. Its function is as follows. Impairs hemostasis in the envenomed animal. Functionally, inhibits platelet aggregation induced by ADP. Acts by inhibiting fibrinogen interaction with platelet receptors GPIIb/GPIIIa (ITGA2B/ITGB3). Also inhibits platelet aggregate dissociation in human platelet-rich plasma. The polypeptide is Zinc metalloproteinase/disintegrin (Agkistrodon piscivorus piscivorus (Eastern cottonmouth)).